Reading from the N-terminus, the 199-residue chain is ATP-dependent Clp protease proteolytic subunit (199 aa).

Ser-97 acts as the Nucleophile in catalysis. The active site involves His-122.

Belongs to the peptidase S14 family. Fourteen ClpP subunits assemble into 2 heptameric rings which stack back to back to give a disk-like structure with a central cavity, resembling the structure of eukaryotic proteasomes.

Its subcellular location is the cytoplasm. It carries out the reaction Hydrolysis of proteins to small peptides in the presence of ATP and magnesium. alpha-casein is the usual test substrate. In the absence of ATP, only oligopeptides shorter than five residues are hydrolyzed (such as succinyl-Leu-Tyr-|-NHMec, and Leu-Tyr-Leu-|-Tyr-Trp, in which cleavage of the -Tyr-|-Leu- and -Tyr-|-Trp bonds also occurs).. Functionally, cleaves peptides in various proteins in a process that requires ATP hydrolysis. Has a chymotrypsin-like activity. Plays a major role in the degradation of misfolded proteins. The sequence is that of ATP-dependent Clp protease proteolytic subunit from Geobacter sulfurreducens (strain ATCC 51573 / DSM 12127 / PCA).